Reading from the N-terminus, the 185-residue chain is Shikimate kinase (185 aa).

Position 12-17 (12-17 (GSGKTT)) interacts with ATP. Mg(2+) is bound at residue Thr16. Residues Asp34, Arg58, and Gly79 each contribute to the substrate site. Residue Arg116 coordinates ATP. Arg135 lines the substrate pocket.

Belongs to the shikimate kinase family. In terms of assembly, monomer. Mg(2+) is required as a cofactor.

It localises to the cytoplasm. It catalyses the reaction shikimate + ATP = 3-phosphoshikimate + ADP + H(+). The protein operates within metabolic intermediate biosynthesis; chorismate biosynthesis; chorismate from D-erythrose 4-phosphate and phosphoenolpyruvate: step 5/7. Its function is as follows. Catalyzes the specific phosphorylation of the 3-hydroxyl group of shikimic acid using ATP as a cosubstrate. This is Shikimate kinase from Corynebacterium jeikeium (strain K411).